A 319-amino-acid chain; its full sequence is Type II secretion system protein C 2 (319 aa).

The Cytoplasmic portion of the chain corresponds to 1-42 (MARVVFRDARIYLIQWLTKIRHTLNQRQSLNTDKEHLRKIVR). The chain crosses the membrane as a helical span at residues 43–65 (GMFWLMLLIISAKVAHSLWRYFS). Residues 66-319 (FSAEYTAVSP…ARHDISIALR (254 aa)) lie on the Periplasmic side of the membrane.

The protein belongs to the GSP C family. In terms of assembly, interacts with outer cell membrane protein GspD2 in the periplasm.

The protein resides in the cell inner membrane. Functionally, involved in a type II secretion system (T2SS, formerly general secretion pathway, GSP) for the export of folded proteins across the outer membrane. The polypeptide is Type II secretion system protein C 2 (gspC2) (Escherichia coli O78:H11 (strain H10407 / ETEC)).